The chain runs to 316 residues: Beta-ketoacyl-[acyl-carrier-protein] synthase III 1 (316 aa).

Active-site residues include C112 and H243. The interval 244 to 248 is ACP-binding; sequence QANYR. N273 is an active-site residue.

Belongs to the thiolase-like superfamily. FabH family. In terms of assembly, homodimer.

The protein resides in the cytoplasm. It catalyses the reaction malonyl-[ACP] + acetyl-CoA + H(+) = 3-oxobutanoyl-[ACP] + CO2 + CoA. It functions in the pathway lipid metabolism; fatty acid biosynthesis. Catalyzes the condensation reaction of fatty acid synthesis by the addition to an acyl acceptor of two carbons from malonyl-ACP. Catalyzes the first condensation reaction which initiates fatty acid synthesis and may therefore play a role in governing the total rate of fatty acid production. Possesses both acetoacetyl-ACP synthase and acetyl transacylase activities. Its substrate specificity determines the biosynthesis of branched-chain and/or straight-chain of fatty acids. The polypeptide is Beta-ketoacyl-[acyl-carrier-protein] synthase III 1 (Vibrio parahaemolyticus serotype O3:K6 (strain RIMD 2210633)).